We begin with the raw amino-acid sequence, 451 residues long: Probable glycine dehydrogenase (decarboxylating) subunit 1 (451 aa).

The protein belongs to the GcvP family. N-terminal subunit subfamily. The glycine cleavage system is composed of four proteins: P, T, L and H. In this organism, the P 'protein' is a heterodimer of two subunits.

The enzyme catalyses N(6)-[(R)-lipoyl]-L-lysyl-[glycine-cleavage complex H protein] + glycine + H(+) = N(6)-[(R)-S(8)-aminomethyldihydrolipoyl]-L-lysyl-[glycine-cleavage complex H protein] + CO2. The glycine cleavage system catalyzes the degradation of glycine. The P protein binds the alpha-amino group of glycine through its pyridoxal phosphate cofactor; CO(2) is released and the remaining methylamine moiety is then transferred to the lipoamide cofactor of the H protein. The protein is Probable glycine dehydrogenase (decarboxylating) subunit 1 of Thermococcus kodakarensis (strain ATCC BAA-918 / JCM 12380 / KOD1) (Pyrococcus kodakaraensis (strain KOD1)).